Here is a 520-residue protein sequence, read N- to C-terminus: Beta-glucosidase 45 (520 aa).

The N-terminal stretch at 1 to 22 is a signal peptide; sequence MKNLTSFVIVILLQSLLFHVYG. Residue Asn3 is glycosylated (N-linked (GlcNAc...) asparagine). Residues Gln52, His155, and 200-201 each bind a beta-D-glucoside; that span reads NE. Glu201 functions as the Proton donor in the catalytic mechanism. Cys220 and Cys227 are disulfide-bonded. Residue Asn226 is glycosylated (N-linked (GlcNAc...) asparagine). Residue Tyr344 participates in a beta-D-glucoside binding. A disulfide bond links Cys352 and Cys357. Residue Asn378 is glycosylated (N-linked (GlcNAc...) asparagine). Position 417 (Glu417) interacts with a beta-D-glucoside. The active-site Nucleophile is Glu417. Asn435 is a glycosylation site (N-linked (GlcNAc...) asparagine). Residues Trp466, 473 to 474, and Phe482 contribute to the a beta-D-glucoside site; that span reads EW.

This sequence belongs to the glycosyl hydrolase 1 family. As to expression, expressed in stems and siliques.

The enzyme catalyses Hydrolysis of terminal, non-reducing beta-D-glucosyl residues with release of beta-D-glucose.. Its function is as follows. Hydrolyzes p-nitrophenyl beta-D-glucoside and natural glucosides such as syringin, coniferin and p-coumaryl alcohol glucoside. May be involved in lignification by hydrolyzing monolignol glucosides. In Arabidopsis thaliana (Mouse-ear cress), this protein is Beta-glucosidase 45.